The primary structure comprises 224 residues: Glutamate/aspartate import permease protein GltK (224 aa).

Topologically, residues 1-19 (MYEFDWSSIVPSLPYLLDG) are periplasmic. The chain crosses the membrane as a helical span at residues 20–40 (LVITLKITVTAVVIGILWGTM). An ABC transmembrane type-1 domain is found at 20-216 (LVITLKITVT…VISLSASLLV (197 aa)). Residues 41-67 (LAVMRLSSFAPVAWFAKAYVNVFRSIP) are Cytoplasmic-facing. Residues 68-88 (LVMVLLWFYLIVPGFLQNVLG) traverse the membrane as a helical segment. Topologically, residues 89-94 (LSPKND) are periplasmic. Residues 95-112 (IRLISAMVAFSMFEAAYY) form a helical membrane-spanning segment. Residues 113-154 (SEIIRAGIQSISRGQSSAALALGMTHWQSMKLIILPQAFRAM) are Cytoplasmic-facing. A helical transmembrane segment spans residues 155 to 175 (VPLLLTQGIVLFQDTSLVYVL). The Periplasmic portion of the chain corresponds to 176-196 (SLADFFRTASTIGERDGTQVE). A helical membrane pass occupies residues 197 to 217 (MILFAGFVYFVISLSASLLVS). Residues 218-224 (YLKRRTA) are Cytoplasmic-facing.

It belongs to the binding-protein-dependent transport system permease family. HisMQ subfamily. The complex is composed of two ATP-binding proteins (GltL), two transmembrane proteins (GltJ and GltK) and a solute-binding protein (GltI).

The protein localises to the cell inner membrane. Its function is as follows. Part of the ABC transporter complex GltIJKL involved in glutamate and aspartate uptake. Probably responsible for the translocation of the substrate across the membrane. The chain is Glutamate/aspartate import permease protein GltK (gltK) from Escherichia coli O157:H7.